The sequence spans 418 residues: 6-methylpretetramide 4-monooxygenase (418 aa).

Residues aspartate 15 to arginine 44 and tryptophan 289 to aspartate 299 each bind FAD.

It belongs to the PheA/TfdB FAD monooxygenase family. Requires FAD as cofactor.

The catalysed reaction is 6-methylpretetramide + NADPH + O2 + 2 H(+) = 4-hydroxy-6-methylpretetramide + NADP(+) + H2O. The protein operates within antibiotic biosynthesis; oxytetracycline biosynthesis. Functionally, involved in the biosynthesis of the tetracycline antibiotic, oxytetracycline. Catalyzes the C-4 hydroxylation of 6-methylpretetramide to yield the intermediate 4-hydroxyl-6-methylpretetramid, which is subsequently hydroxylated by OxyL to yield 4-keto-anhydrotetracycline. OxyE serves as the ancillary enzyme to assist OxyL in the hydroxylation of C-4. In Streptomyces rimosus, this protein is 6-methylpretetramide 4-monooxygenase.